The primary structure comprises 591 residues: Formate--tetrahydrofolate ligase (591 aa).

74–81 (TPLGEGKS) contacts ATP.

This sequence belongs to the formate--tetrahydrofolate ligase family.

The catalysed reaction is (6S)-5,6,7,8-tetrahydrofolate + formate + ATP = (6R)-10-formyltetrahydrofolate + ADP + phosphate. It functions in the pathway one-carbon metabolism; tetrahydrofolate interconversion. This chain is Formate--tetrahydrofolate ligase, found in Desulfovibrio desulfuricans (strain ATCC 27774 / DSM 6949 / MB).